A 478-amino-acid polypeptide reads, in one-letter code: Cytochrome c-552 (478 aa).

The signal sequence occupies residues 1 to 26 (MTRIKINARRIFSLLIPFFFFTSVHA). Histidine 94 contributes to the heme c binding site. Heme-binding residues include cysteine 122, cysteine 125, and lysine 126. Positions 160, 163, 164, 209, 212, and 213 each coordinate heme c. Ca(2+)-binding residues include glutamate 215, tyrosine 216, lysine 261, and glutamine 263. A substrate-binding site is contributed by tyrosine 216. Histidine 264 lines the substrate pocket. Histidine 275, cysteine 282, cysteine 285, histidine 286, histidine 301, cysteine 314, cysteine 317, histidine 318, and histidine 393 together coordinate heme c.

It belongs to the cytochrome c-552 family. The cofactor is Ca(2+). It depends on heme c as a cofactor.

It localises to the periplasm. The enzyme catalyses 6 Fe(III)-[cytochrome c] + NH4(+) + 2 H2O = 6 Fe(II)-[cytochrome c] + nitrite + 8 H(+). It functions in the pathway nitrogen metabolism; nitrate reduction (assimilation). Its function is as follows. Catalyzes the reduction of nitrite to ammonia, consuming six electrons in the process. The chain is Cytochrome c-552 from Escherichia coli O17:K52:H18 (strain UMN026 / ExPEC).